Consider the following 515-residue polypeptide: Cytochrome P450 monooxygenase paxP (515 aa).

A helical transmembrane segment spans residues 20–36 (SLLWKLGVFAVLVYFLL). Residue Cys456 participates in heme binding.

The protein belongs to the cytochrome P450 family. Requires heme as cofactor.

The protein resides in the membrane. It participates in secondary metabolite biosynthesis. Functionally, cytochrome P450 monooxygenase; part of the ATM2 gene cluster that mediates the biosynthesis of paxilline, a mycotoxin that acts as an inhibitor of mammalian maxi-K channels. PaxG, the geranylgeranyl diphosphate (GGPP) synthase is proposed to catalyze the first step in paxilline biosynthesis. Condensation of indole-3-glycerol phosphate with GGPP by paxC then forms 3-geranylgeranylindole (3-GGI), followed by epoxidation and cyclization of this intermediate (by paxM and paxB) to form paspaline. Paspaline is subsequently converted to 13-desoxypaxilline by paxP, the latter being then converted to paxilline by paxQ. Finally paxilline can be mono- and di-prenylated by paxD. PaxP can also utilized beta-paxitriol and alpha-PC-M6 as substrates converting them to paxilline. The polypeptide is Cytochrome P450 monooxygenase paxP (Penicillium paxilli).